The following is a 311-amino-acid chain: Protoheme IX farnesyltransferase (311 aa).

8 helical membrane-spanning segments follow: residues 39-59, 61-81, 111-131, 133-153, 162-182, 187-207, 246-266, and 287-307; these read LLAMAAGLSLALYVTGIPIGE, LPEILFAIFGSAFVIGAAGAF, ALVLGISLSLLGLLLLGVASP, AALFGFLGLFLYVVPYTMWSK, IGSVGGAVPPLIGWAAISGDL, IIGLFVVTVLWQMPHFYAIAI, FFFVSLSWFITIVALVLSLIW, and FVFSLNYLTILFTVIIGFSLL.

The protein belongs to the UbiA prenyltransferase family. Protoheme IX farnesyltransferase subfamily. In terms of assembly, interacts with CtaA.

The protein localises to the cell membrane. It carries out the reaction heme b + (2E,6E)-farnesyl diphosphate + H2O = Fe(II)-heme o + diphosphate. Its pathway is porphyrin-containing compound metabolism; heme O biosynthesis; heme O from protoheme: step 1/1. In terms of biological role, converts heme B (protoheme IX) to heme O by substitution of the vinyl group on carbon 2 of heme B porphyrin ring with a hydroxyethyl farnesyl side group. The polypeptide is Protoheme IX farnesyltransferase (Shouchella clausii (strain KSM-K16) (Alkalihalobacillus clausii)).